A 130-amino-acid chain; its full sequence is Cyclin-dependent kinase 4 inhibitor B (130 aa).

ANK repeat units lie at residues 5-34 (GSDA…DPNA), 38-66 (FGRR…EPNC), 71-100 (TLTR…RLDV), and 104-130 (WGRL…ATGD). Residue Thr12 is modified to Phosphothreonine.

It belongs to the CDKN2 cyclin-dependent kinase inhibitor family. In terms of assembly, heterodimer of CDKN2B with CDK4 or CDK6. As to expression, expression abundant in lung, less abundant in testis, barely detectable in liver, and not detectable in neonatal kidney, adult kidney, brain, heart, or spleen.

Interacts strongly with CDK4 and CDK6. Potent inhibitor. Potential effector of TGF-beta induced cell cycle arrest. The chain is Cyclin-dependent kinase 4 inhibitor B (Cdkn2b) from Rattus norvegicus (Rat).